We begin with the raw amino-acid sequence, 237 residues long: Insulin-like growth factor-binding protein 6 (237 aa).

A signal peptide spans 1-25 (MTPHRLLPPLLLTLLLAARPGGALA). The region spanning 26–105 (RCPGCGQGVS…LQGRGRCGRA (80 aa)) is the IGFBP N-terminal domain. 5 disulfide bridges follow: C27/C30, C38/C42, C55/C61, C69/C82, and C76/C102. The tract at residues 101 to 158 (RCGRARTPSGENPKESKPQAGTARSQDVNRRDQQRNSGTSTTPSRSNSGGVQDTEMGP) is disordered. Polar residues predominate over residues 135–151 (RNSGTSTTPSRSNSGGV). One can recognise a Thyroglobulin type-1 domain in the interval 156 to 231 (MGPCRKHLDS…SEGGDGSSLC (76 aa)). Disulfide bonds link C159/C186, C197/C208, and C210/C231. The segment at 215–237 (GQPLPGSSEGGDGSSLCPTGSSG) is disordered.

Interacts (via C-terminal domain) with PHB2. Post-translationally, O-glycosylated.

The protein resides in the secreted. IGF-binding proteins prolong the half-life of the IGFs and have been shown to either inhibit or stimulate the growth promoting effects of the IGFs on cell culture. They alter the interaction of IGFs with their cell surface receptors. Activates the MAPK signaling pathway and induces cell migration. The sequence is that of Insulin-like growth factor-binding protein 6 (IGFBP6) from Bos taurus (Bovine).